We begin with the raw amino-acid sequence, 765 residues long: MSADASTTPAADSNVTSTPETSTTPAAPAPEVTAVESTTAPNASQPHSASLYVGELDPSVTEAMLYELFSSIGQVASIRVCRDAVTRRSLGYAYVNYNNTADGERALEDLNYTLIKGKPCRIMWSQRDPALRKTGQGNVFIKNLDSAIDNKALHDTFAAFGNILSCKVAQDEFGNSKGYGFVHYETAEAANNAIKHVNGMLLNDKKVFVGHHISKKDRQSKFEEMKANFTNVYIKNIDQDVTEEEFRELFEKFGEITSATLSRDQEGKSRGFGFVNFSTHESAQAAVDEMNEKEIRTQKLYVGRAQKKHEREEELRKQYEAARLEKASKYQGVNLYVKNLTDDVDDEKLRELFGPYGTITSAKVMRDTNIERTQTPESDKEKENKEATKENEKESSEAEKAEKTEEKPADSGDEKKEDKESKKADKKGLGKSKGFGFVCFSSPDEASKAVTEMNQRMVNGKPLYVALAQRKDVRRSQLEASIQARNTIRQQQAAAAAGMPQPYMQPAVFYGPGQQGFIPGQRGGIAFPPQPGMVMAGIPGGRPGQYPGPFPGQQGGRGMGPNQQLPPNFQGIPMGAMQGPVPNGMGYPQGMAQVQFGRGAGGRGQVPGMPNMGQGMRGPGYGQGRGGVPVQQGQMRPGQGGRGQNAAQAPAGRPEEAVAGGLTAQALSAAPPPQQKQMLGEALYPKIQAQQPELAGKITGMLLEMENTELLSLLEDEEALRAKVDEALNVYDEYMKNKGGESEATGEAAKPKEAAKETSTEENKS.

Low complexity predominate over residues 1-37; it reads MSADASTTPAADSNVTSTPETSTTPAAPAPEVTAVES. The disordered stretch occupies residues 1 to 49; sequence MSADASTTPAADSNVTSTPETSTTPAAPAPEVTAVESTTAPNASQPHSA. Residues 38 to 48 show a composition bias toward polar residues; it reads TTAPNASQPHS. RRM domains lie at 49 to 127, 137 to 214, 230 to 307, and 333 to 470; these read ASLY…WSQR, GNVF…HHIS, TNVY…RAQK, and VNLY…LAQR. 2 disordered regions span residues 364–427 and 619–657; these read VMRD…ADKK and PGYG…PEEA. The span at 377–427 shows a compositional bias: basic and acidic residues; sequence ESDKEKENKEATKENEKESSEAEKAEKTEEKPADSGDEKKEDKESKKADKK. A compositionally biased stretch (low complexity) spans 628–637; it reads VPVQQGQMRP. The 78-residue stretch at 659-736 folds into the PABC domain; the sequence is AGGLTAQALS…ALNVYDEYMK (78 aa). Positions 737-765 are disordered; it reads NKGGESEATGEAAKPKEAAKETSTEENKS. The span at 749-765 shows a compositional bias: basic and acidic residues; it reads AKPKEAAKETSTEENKS.

Belongs to the polyadenylate-binding protein type-1 family.

The protein resides in the cytoplasm. It is found in the nucleus. Its function is as follows. Binds the poly(A) tail of mRNA. Appears to be an important mediator of the multiple roles of the poly(A) tail in mRNA biogenesis, stability and translation. In the nucleus, involved in both mRNA cleavage and polyadenylation. Is also required for efficient mRNA export to the cytoplasm. Acts in concert with a poly(A)-specific nuclease (PAN) to affect poly(A) tail shortening, which may occur concomitantly with either nucleocytoplasmic mRNA transport or translational initiation. In the cytoplasm, stimulates translation initiation and regulates mRNA decay through translation termination-coupled poly(A) shortening, probably mediated by PAN. This Aspergillus oryzae (strain ATCC 42149 / RIB 40) (Yellow koji mold) protein is Polyadenylate-binding protein, cytoplasmic and nuclear (pab1).